Consider the following 225-residue polypeptide: NAD(P)H-quinone oxidoreductase subunit K, chloroplastic (225 aa).

The [4Fe-4S] cluster site is built by C43, C44, C108, and C139.

The protein belongs to the complex I 20 kDa subunit family. As to quaternary structure, NDH is composed of at least 16 different subunits, 5 of which are encoded in the nucleus. The cofactor is [4Fe-4S] cluster.

It localises to the plastid. The protein resides in the chloroplast thylakoid membrane. It carries out the reaction a plastoquinone + NADH + (n+1) H(+)(in) = a plastoquinol + NAD(+) + n H(+)(out). The catalysed reaction is a plastoquinone + NADPH + (n+1) H(+)(in) = a plastoquinol + NADP(+) + n H(+)(out). Its function is as follows. NDH shuttles electrons from NAD(P)H:plastoquinone, via FMN and iron-sulfur (Fe-S) centers, to quinones in the photosynthetic chain and possibly in a chloroplast respiratory chain. The immediate electron acceptor for the enzyme in this species is believed to be plastoquinone. Couples the redox reaction to proton translocation, and thus conserves the redox energy in a proton gradient. In Agrostis stolonifera (Creeping bentgrass), this protein is NAD(P)H-quinone oxidoreductase subunit K, chloroplastic.